We begin with the raw amino-acid sequence, 423 residues long: D-tagatose-1,6-bisphosphate aldolase subunit GatZ (423 aa).

It belongs to the GatZ/KbaZ family. GatZ subfamily. In terms of assembly, forms a complex with GatY.

It functions in the pathway carbohydrate metabolism; D-tagatose 6-phosphate degradation; D-glyceraldehyde 3-phosphate and glycerone phosphate from D-tagatose 6-phosphate: step 2/2. In terms of biological role, component of the tagatose-1,6-bisphosphate aldolase GatYZ that is required for full activity and stability of the Y subunit. Could have a chaperone-like function for the proper and stable folding of GatY. When expressed alone, GatZ does not show any aldolase activity. Is involved in the catabolism of galactitol. The sequence is that of D-tagatose-1,6-bisphosphate aldolase subunit GatZ from Salmonella newport (strain SL254).